A 437-amino-acid polypeptide reads, in one-letter code: 3-phosphoshikimate 1-carboxyvinyltransferase (437 aa).

3 residues coordinate 3-phosphoshikimate: Lys24, Ser25, and Arg29. Lys24 provides a ligand contact to phosphoenolpyruvate. Gly95 and Arg123 together coordinate phosphoenolpyruvate. Residues Ser168, Gln170, Asp317, and Lys344 each contribute to the 3-phosphoshikimate site. Residue Gln170 coordinates phosphoenolpyruvate. The active-site Proton acceptor is Asp317. Phosphoenolpyruvate contacts are provided by Arg348 and Arg390.

This sequence belongs to the EPSP synthase family. As to quaternary structure, monomer.

The protein localises to the cytoplasm. The catalysed reaction is 3-phosphoshikimate + phosphoenolpyruvate = 5-O-(1-carboxyvinyl)-3-phosphoshikimate + phosphate. It functions in the pathway metabolic intermediate biosynthesis; chorismate biosynthesis; chorismate from D-erythrose 4-phosphate and phosphoenolpyruvate: step 6/7. Functionally, catalyzes the transfer of the enolpyruvyl moiety of phosphoenolpyruvate (PEP) to the 5-hydroxyl of shikimate-3-phosphate (S3P) to produce enolpyruvyl shikimate-3-phosphate and inorganic phosphate. This is 3-phosphoshikimate 1-carboxyvinyltransferase from Wolinella succinogenes (strain ATCC 29543 / DSM 1740 / CCUG 13145 / JCM 31913 / LMG 7466 / NCTC 11488 / FDC 602W) (Vibrio succinogenes).